We begin with the raw amino-acid sequence, 155 residues long: Ribosome maturation factor RimP (155 aa).

The protein belongs to the RimP family.

It localises to the cytoplasm. Required for maturation of 30S ribosomal subunits. This Deinococcus geothermalis (strain DSM 11300 / CIP 105573 / AG-3a) protein is Ribosome maturation factor RimP.